Reading from the N-terminus, the 208-residue chain is Heat shock protein 26 (208 aa).

A phosphoserine mark is found at Ser44, Ser52, and Ser58. A sHSP domain is found at 71 to 179; that stretch reads ANRNDIHWPA…KSKERIIQIQ (109 aa). A disordered region spans residues 187–208; sequence NVKANESEVKGKENGAPNGKDK. Residues 191 to 208 are compositionally biased toward basic and acidic residues; it reads NESEVKGKENGAPNGKDK.

Belongs to the small heat shock protein (HSP20) family.

This chain is Heat shock protein 26 (Hsp26), found in Drosophila melanogaster (Fruit fly).